We begin with the raw amino-acid sequence, 427 residues long: Trigger factor (427 aa).

The PPIase FKBP-type domain occupies 163–248; the sequence is GDTVVIDFVG…IHEVKAKEVP (86 aa).

Belongs to the FKBP-type PPIase family. Tig subfamily.

The protein localises to the cytoplasm. The catalysed reaction is [protein]-peptidylproline (omega=180) = [protein]-peptidylproline (omega=0). Functionally, involved in protein export. Acts as a chaperone by maintaining the newly synthesized protein in an open conformation. Functions as a peptidyl-prolyl cis-trans isomerase. The protein is Trigger factor of Streptococcus pneumoniae (strain 70585).